Reading from the N-terminus, the 975-residue chain is Protein bicaudal D homolog 1 (975 aa).

Coiled-coil stretches lie at residues 1–265 (MAAE…HISI) and 319–496 (SELN…IANE). Disordered regions lie at residues 383-403 (SSKE…GEEA), 545-616 (RSGS…LDTS), 800-824 (DHEQ…VSGE), 836-877 (LLHS…ASYL), and 922-975 (DCQQ…PPHP). Composition is skewed to basic and acidic residues over residues 385 to 403 (KELK…GEEA) and 581 to 590 (VAKESTEASK). A compositionally biased stretch (polar residues) spans 592–602 (PSPTKTPTISP). The stretch at 663-803 (IDKDKEALME…LEDLEFDHEQ (141 aa)) forms a coiled coil. The interaction with RAB6A stretch occupies residues 663–803 (IDKDKEALME…LEDLEFDHEQ (141 aa)). A compositionally biased stretch (polar residues) spans 840–877 (QGPQTPNIRVSSGTQRKRQFSPSLCDQSRPRTSGASYL).

The protein belongs to the BicD family. As to quaternary structure, interacts with RAB6A. Interacts (via C-terminus) with RAB6B (GTP-bound); the interaction is direct. Interacts with CLIP-115 and KIFC2. In terms of assembly, (Microbial infection) Interacts with human cytomegalovirus/HHV-5 protein UL32. As to expression, expressed in the brain, heart and skeletal muscle.

It localises to the golgi apparatus. In terms of biological role, regulates coat complex coatomer protein I (COPI)-independent Golgi-endoplasmic reticulum transport by recruiting the dynein-dynactin motor complex. This is Protein bicaudal D homolog 1 (BICD1) from Homo sapiens (Human).